Here is a 495-residue protein sequence, read N- to C-terminus: DDB1- and CUL4-associated factor 4 (495 aa).

Over residues 1–17 the composition is skewed to basic residues; it reads MNKSRWQSRRRHGRRSH. A disordered region spans residues 1 to 66; the sequence is MNKSRWQSRR…TAGTSSVPEL (66 aa). Positions 24–34 are enriched in basic and acidic residues; the sequence is RLRDSEDRSDS. A compositionally biased stretch (low complexity) spans 51 to 62; sequence PSTSSGTAGTSS. WD repeat units lie at residues 368-407 and 410-451; these read FHDS…CVRQ and GHVN…LLRT.

In terms of assembly, interacts with DDB1 and CUL4A.

Its pathway is protein modification; protein ubiquitination. Its function is as follows. May function as a substrate receptor for CUL4-DDB1 E3 ubiquitin-protein ligase complex. The polypeptide is DDB1- and CUL4-associated factor 4 (DCAF4) (Homo sapiens (Human)).